Consider the following 125-residue polypeptide: Small ribosomal subunit protein uS13 (125 aa).

A disordered region spans residues 90-125 (QRHRKGLPVRGQRTKTNARTRKGPKRTVAGKKKATK).

It belongs to the universal ribosomal protein uS13 family. Part of the 30S ribosomal subunit. Forms a loose heterodimer with protein S19. Forms two bridges to the 50S subunit in the 70S ribosome.

Functionally, located at the top of the head of the 30S subunit, it contacts several helices of the 16S rRNA. In the 70S ribosome it contacts the 23S rRNA (bridge B1a) and protein L5 of the 50S subunit (bridge B1b), connecting the 2 subunits; these bridges are implicated in subunit movement. Contacts the tRNAs in the A and P-sites. The protein is Small ribosomal subunit protein uS13 of Bifidobacterium adolescentis (strain ATCC 15703 / DSM 20083 / NCTC 11814 / E194a).